The following is a 256-amino-acid chain: Imidazole glycerol phosphate synthase subunit HisF (256 aa).

Catalysis depends on residues Asp11 and Asp130.

It belongs to the HisA/HisF family. As to quaternary structure, heterodimer of HisH and HisF.

The protein resides in the cytoplasm. It catalyses the reaction 5-[(5-phospho-1-deoxy-D-ribulos-1-ylimino)methylamino]-1-(5-phospho-beta-D-ribosyl)imidazole-4-carboxamide + L-glutamine = D-erythro-1-(imidazol-4-yl)glycerol 3-phosphate + 5-amino-1-(5-phospho-beta-D-ribosyl)imidazole-4-carboxamide + L-glutamate + H(+). It functions in the pathway amino-acid biosynthesis; L-histidine biosynthesis; L-histidine from 5-phospho-alpha-D-ribose 1-diphosphate: step 5/9. Functionally, IGPS catalyzes the conversion of PRFAR and glutamine to IGP, AICAR and glutamate. The HisF subunit catalyzes the cyclization activity that produces IGP and AICAR from PRFAR using the ammonia provided by the HisH subunit. The sequence is that of Imidazole glycerol phosphate synthase subunit HisF from Prochlorococcus marinus (strain MIT 9215).